The primary structure comprises 186 residues: Probable chorismate pyruvate-lyase (186 aa).

Substrate-binding residues include Arg-80, Leu-118, and Glu-170.

Belongs to the UbiC family.

Its subcellular location is the cytoplasm. It catalyses the reaction chorismate = 4-hydroxybenzoate + pyruvate. Its pathway is cofactor biosynthesis; ubiquinone biosynthesis. In terms of biological role, removes the pyruvyl group from chorismate, with concomitant aromatization of the ring, to provide 4-hydroxybenzoate (4HB) for the ubiquinone pathway. This Pseudomonas syringae pv. tomato (strain ATCC BAA-871 / DC3000) protein is Probable chorismate pyruvate-lyase.